A 257-amino-acid polypeptide reads, in one-letter code: 1-(5-phosphoribosyl)-5-[(5-phosphoribosylamino)methylideneamino] imidazole-4-carboxamide isomerase (257 aa).

Asp-8 acts as the Proton acceptor in catalysis. Asp-129 functions as the Proton donor in the catalytic mechanism.

Belongs to the HisA/HisF family.

It localises to the cytoplasm. It catalyses the reaction 1-(5-phospho-beta-D-ribosyl)-5-[(5-phospho-beta-D-ribosylamino)methylideneamino]imidazole-4-carboxamide = 5-[(5-phospho-1-deoxy-D-ribulos-1-ylimino)methylamino]-1-(5-phospho-beta-D-ribosyl)imidazole-4-carboxamide. It participates in amino-acid biosynthesis; L-histidine biosynthesis; L-histidine from 5-phospho-alpha-D-ribose 1-diphosphate: step 4/9. In Gloeothece citriformis (strain PCC 7424) (Cyanothece sp. (strain PCC 7424)), this protein is 1-(5-phosphoribosyl)-5-[(5-phosphoribosylamino)methylideneamino] imidazole-4-carboxamide isomerase.